The sequence spans 305 residues: Foldase protein PrsA (305 aa).

The signal sequence occupies residues 1–19; the sequence is MKKWFIALAGLLLTVTLAG. Residue Cys20 is the site of N-palmitoyl cysteine attachment. Cys20 carries S-diacylglycerol cysteine lipidation. Residues 136–235 form the PpiC domain; that stretch reads EPEVSVAHIL…YGYHVILMLK (100 aa).

The protein belongs to the PrsA family.

It is found in the cell membrane. The catalysed reaction is [protein]-peptidylproline (omega=180) = [protein]-peptidylproline (omega=0). Its function is as follows. Plays a major role in protein secretion by helping the post-translocational extracellular folding of several secreted proteins. This chain is Foldase protein PrsA, found in Levilactobacillus brevis (strain ATCC 367 / BCRC 12310 / CIP 105137 / JCM 1170 / LMG 11437 / NCIMB 947 / NCTC 947) (Lactobacillus brevis).